A 302-amino-acid polypeptide reads, in one-letter code: MQDLLNEILDEVRPLLGQGKVADYIPALGGVRPDQLGIAVYGNDGQVFSAGDAETQFSIQSISKVFSLVQAIGHSGEDIWQRLGHEPSGQPFNSLVQLEFERGRPRNPFINAGALVICDINQARFAAPSLSMRDFVRRLCGNRAITSDSKVAESEYQHRSRNAAAAYLMKSFDNFHGDVEDVLRSYFHHCALSMNCIDLAKAFGFLANQGFCTHSGEQILTARQATQVNSIMATSGLYDEAGNFAYRVGLPGKSGVGGGIVAIVPERASVCVWSPELNAAGNSLVGMAALEKLSARIDWSVF.

Ser-61, Asn-111, Glu-155, Asn-162, Tyr-186, Tyr-238, and Val-256 together coordinate substrate.

This sequence belongs to the glutaminase family. As to quaternary structure, homotetramer.

It catalyses the reaction L-glutamine + H2O = L-glutamate + NH4(+). The chain is Glutaminase from Pseudomonas savastanoi pv. phaseolicola (strain 1448A / Race 6) (Pseudomonas syringae pv. phaseolicola (strain 1448A / Race 6)).